Here is a 402-residue protein sequence, read N- to C-terminus: MTTIGTPLSPRATRVMLLGSGELGREVLIALQRLGVETIAVDRYENAPGHQIAHHARVISMTDPEQLRALIEAEKPDLVVPEIEAIATATLEALETEGVVRVIPTARAARLTMDREGIRRLAAETLGLPTSPYQFCGSLDELQAAIDPESGGVGYPCVVKPLMSSSGKGQSKLDGPADVEKAWDYAMAGSRVTNNRVIVEGFVDFDYEITLLTVRALGDDGEVETSFCAPIGHRQANGDYVESWQPHPMTEAALRSAQHIARSVTENLGGQGIFGVELFIKGDQVYFSEVSPRPHDTGMVTMITQWQNEFELHARAILGLPVDTTLKSAGASAVIYGGVEAQGVVFDGVDEALRVPRTELRLFGKPESFITRRMGVALARDEDVDTARRNAAEAAGRVRVSG.

Residues 22–23 (EL) and glutamate 82 contribute to the N(1)-(5-phospho-beta-D-ribosyl)glycinamide site. ATP is bound by residues arginine 115, lysine 160, 165–170 (SSGKGQ), 200–203 (EGFV), and glutamate 208. An ATP-grasp domain is found at 120-318 (RLAAETLGLP…EFELHARAIL (199 aa)). Mg(2+)-binding residues include glutamate 277 and glutamate 289. Residues aspartate 296, lysine 365, and 372-373 (RR) contribute to the N(1)-(5-phospho-beta-D-ribosyl)glycinamide site.

It belongs to the PurK/PurT family. In terms of assembly, homodimer.

The catalysed reaction is N(1)-(5-phospho-beta-D-ribosyl)glycinamide + formate + ATP = N(2)-formyl-N(1)-(5-phospho-beta-D-ribosyl)glycinamide + ADP + phosphate + H(+). The protein operates within purine metabolism; IMP biosynthesis via de novo pathway; N(2)-formyl-N(1)-(5-phospho-D-ribosyl)glycinamide from N(1)-(5-phospho-D-ribosyl)glycinamide (formate route): step 1/1. Functionally, involved in the de novo purine biosynthesis. Catalyzes the transfer of formate to 5-phospho-ribosyl-glycinamide (GAR), producing 5-phospho-ribosyl-N-formylglycinamide (FGAR). Formate is provided by PurU via hydrolysis of 10-formyl-tetrahydrofolate. The chain is Formate-dependent phosphoribosylglycinamide formyltransferase from Mycobacteroides abscessus (strain ATCC 19977 / DSM 44196 / CCUG 20993 / CIP 104536 / JCM 13569 / NCTC 13031 / TMC 1543 / L948) (Mycobacterium abscessus).